A 163-amino-acid polypeptide reads, in one-letter code: Putative 4-hydroxy-4-methyl-2-oxoglutarate aldolase (163 aa).

Residues 79 to 82 (GDQL) and Arg101 each bind substrate. Position 102 (Asp102) interacts with a divalent metal cation.

This sequence belongs to the class II aldolase/RraA-like family. In terms of assembly, homotrimer. A divalent metal cation is required as a cofactor.

It catalyses the reaction 4-hydroxy-4-methyl-2-oxoglutarate = 2 pyruvate. The catalysed reaction is oxaloacetate + H(+) = pyruvate + CO2. Functionally, catalyzes the aldol cleavage of 4-hydroxy-4-methyl-2-oxoglutarate (HMG) into 2 molecules of pyruvate. Also contains a secondary oxaloacetate (OAA) decarboxylase activity due to the common pyruvate enolate transition state formed following C-C bond cleavage in the retro-aldol and decarboxylation reactions. This Dechloromonas aromatica (strain RCB) protein is Putative 4-hydroxy-4-methyl-2-oxoglutarate aldolase.